The following is an 861-amino-acid chain: DNA mismatch repair protein MutS (861 aa).

618-625 (GPNMGGKS) contacts ATP.

It belongs to the DNA mismatch repair MutS family.

In terms of biological role, this protein is involved in the repair of mismatches in DNA. It is possible that it carries out the mismatch recognition step. This protein has a weak ATPase activity. This is DNA mismatch repair protein MutS from Shewanella frigidimarina (strain NCIMB 400).